A 129-amino-acid polypeptide reads, in one-letter code: RxLR effector protein SFI6 (129 aa).

The first 16 residues, 1–16 (MTLVVLATGLLASGTA), serve as a signal peptide directing secretion. The short motif at 42–64 (RFLRSHQITDDKVEINEHGEEER) is the RxLR-dEER element.

The protein belongs to the RxLR effector family.

It localises to the secreted. The protein resides in the host cytoplasm. Its subcellular location is the host cell membrane. Functionally, effector that suppresses flg22-induced post-translational MAP kinase activation in tomato but not in Arabidopsis. The perception of highly conserved pathogen- or microbe-associated molecular patterns (PAMPs/MAMPs), such as flg22, triggers converging signaling pathways recruiting MAP kinase cascades and inducing transcriptional re-programming, yielding a generic antimicrobial response. The protein is RxLR effector protein SFI6 of Phytophthora infestans (strain T30-4) (Potato late blight agent).